We begin with the raw amino-acid sequence, 117 residues long: Large ribosomal subunit protein bL19 (117 aa).

The protein belongs to the bacterial ribosomal protein bL19 family.

In terms of biological role, this protein is located at the 30S-50S ribosomal subunit interface and may play a role in the structure and function of the aminoacyl-tRNA binding site. The polypeptide is Large ribosomal subunit protein bL19 (Alkalilimnicola ehrlichii (strain ATCC BAA-1101 / DSM 17681 / MLHE-1)).